The chain runs to 483 residues: Membrane-bound lytic murein transglycosylase F (483 aa).

The first 18 residues, 1-18, serve as a signal peptide directing secretion; it reads MKGLIARFIAGFALLLWA. The interval 19–267 is non-LT domain; it reads WDMVFPWQQL…RIEEKYFNHL (249 aa). The interval 269 to 483 is LT domain; that stretch reads HFDYVDIQSY…SKESDSTLKE (215 aa). E312 is a catalytic residue. The tract at residues 458–483 is disordered; that stretch reads QQIQNNEEQPSVPQEISKESDSTLKE. Positions 473-483 are enriched in basic and acidic residues; the sequence is ISKESDSTLKE.

This sequence in the N-terminal section; belongs to the bacterial solute-binding protein 3 family. It in the C-terminal section; belongs to the transglycosylase Slt family.

The protein localises to the cell outer membrane. The catalysed reaction is Exolytic cleavage of the (1-&gt;4)-beta-glycosidic linkage between N-acetylmuramic acid (MurNAc) and N-acetylglucosamine (GlcNAc) residues in peptidoglycan, from either the reducing or the non-reducing ends of the peptidoglycan chains, with concomitant formation of a 1,6-anhydrobond in the MurNAc residue.. Functionally, murein-degrading enzyme that degrades murein glycan strands and insoluble, high-molecular weight murein sacculi, with the concomitant formation of a 1,6-anhydromuramoyl product. Lytic transglycosylases (LTs) play an integral role in the metabolism of the peptidoglycan (PG) sacculus. Their lytic action creates space within the PG sacculus to allow for its expansion as well as for the insertion of various structures such as secretion systems and flagella. In Actinobacillus pleuropneumoniae serotype 3 (strain JL03), this protein is Membrane-bound lytic murein transglycosylase F.